The following is a 139-amino-acid chain: Transcription antitermination protein NusB (139 aa).

Belongs to the NusB family.

Its function is as follows. Involved in transcription antitermination. Required for transcription of ribosomal RNA (rRNA) genes. Binds specifically to the boxA antiterminator sequence of the ribosomal RNA (rrn) operons. The polypeptide is Transcription antitermination protein NusB (Enterobacter sp. (strain 638)).